A 350-amino-acid polypeptide reads, in one-letter code: Phenylalanine--tRNA ligase alpha subunit (350 aa).

Mg(2+) is bound at residue glutamate 271.

It belongs to the class-II aminoacyl-tRNA synthetase family. Phe-tRNA synthetase alpha subunit type 1 subfamily. As to quaternary structure, tetramer of two alpha and two beta subunits. Mg(2+) serves as cofactor.

The protein resides in the cytoplasm. The catalysed reaction is tRNA(Phe) + L-phenylalanine + ATP = L-phenylalanyl-tRNA(Phe) + AMP + diphosphate + H(+). This Verminephrobacter eiseniae (strain EF01-2) protein is Phenylalanine--tRNA ligase alpha subunit.